Here is a 332-residue protein sequence, read N- to C-terminus: UPF0194 membrane protein YbhG (332 aa).

Residues 1 to 26 (MMKKPVVIELAVVVLAAVVAGGYWWY) form the signal peptide. A coiled-coil region spans residues 108-209 (EEIAQAAAAV…LNLQDSTLIA (102 aa)).

Belongs to the UPF0194 family.

Its subcellular location is the periplasm. In Shigella sonnei (strain Ss046), this protein is UPF0194 membrane protein YbhG (ybhG).